We begin with the raw amino-acid sequence, 837 residues long: Anaphase-promoting complex subunit 4 (837 aa).

Composition is skewed to low complexity over residues 59-81 (NDNN…NDNN) and 547-581 (SSSS…NNNN). Disordered regions lie at residues 59 to 89 (NDNN…KSNK) and 547 to 588 (SSSS…QSGN).

It belongs to the APC4 family. As to quaternary structure, the APC/C is composed of at least 13 subunits that stay tightly associated throughout the cell cycle: anapc1, anapc2, anapc3, anapc4, anapc5, anapc6, anapc7, anapc8, anapc10, anapc11, cdc20, cdc26 and cdh1.

It localises to the nucleus. It participates in protein modification; protein ubiquitination. Component of the anaphase promoting complex/cyclosome (APC/C), a cell cycle-regulated E3 ubiquitin-protein ligase complex that controls progression through mitosis and the G1 phase of the cell cycle. This is Anaphase-promoting complex subunit 4 (anapc4) from Dictyostelium discoideum (Social amoeba).